Reading from the N-terminus, the 339-residue chain is Ketol-acid reductoisomerase (NADP(+)) (339 aa).

The KARI N-terminal Rossmann domain maps to 1–182; sequence MRVYYDRDAD…GGGRSGIIET (182 aa). NADP(+) is bound by residues 24–27, Arg48, Ser51, Ser53, and 83–86; these read YGSQ and DELQ. The active site involves His108. Gly134 provides a ligand contact to NADP(+). One can recognise a KARI C-terminal knotted domain in the interval 183–328; the sequence is TFREECETDL…EKLRAMMPWI (146 aa). Residues Asp191, Glu195, Glu227, and Glu231 each contribute to the Mg(2+) site. Position 252 (Ser252) interacts with substrate.

Belongs to the ketol-acid reductoisomerase family. Requires Mg(2+) as cofactor.

It catalyses the reaction (2R)-2,3-dihydroxy-3-methylbutanoate + NADP(+) = (2S)-2-acetolactate + NADPH + H(+). The enzyme catalyses (2R,3R)-2,3-dihydroxy-3-methylpentanoate + NADP(+) = (S)-2-ethyl-2-hydroxy-3-oxobutanoate + NADPH + H(+). The protein operates within amino-acid biosynthesis; L-isoleucine biosynthesis; L-isoleucine from 2-oxobutanoate: step 2/4. It participates in amino-acid biosynthesis; L-valine biosynthesis; L-valine from pyruvate: step 2/4. Functionally, involved in the biosynthesis of branched-chain amino acids (BCAA). Catalyzes an alkyl-migration followed by a ketol-acid reduction of (S)-2-acetolactate (S2AL) to yield (R)-2,3-dihydroxy-isovalerate. In the isomerase reaction, S2AL is rearranged via a Mg-dependent methyl migration to produce 3-hydroxy-3-methyl-2-ketobutyrate (HMKB). In the reductase reaction, this 2-ketoacid undergoes a metal-dependent reduction by NADPH to yield (R)-2,3-dihydroxy-isovalerate. This Chelativorans sp. (strain BNC1) protein is Ketol-acid reductoisomerase (NADP(+)).